We begin with the raw amino-acid sequence, 235 residues long: Carbohydrate deacetylase (235 aa).

His-61 and His-124 together coordinate Mg(2+).

The protein belongs to the YdjC deacetylase family. Mg(2+) is required as a cofactor.

Functionally, probably catalyzes the deacetylation of acetylated carbohydrates an important step in the degradation of oligosaccharides. The chain is Carbohydrate deacetylase from Bacillus cereus (strain 03BB102).